The primary structure comprises 300 residues: Protein YIF1B-B (300 aa).

The tract at residues 1-46 (MNQESSFRAPPKRRVRGSNPNISNPHQLFDDTSGGPVPHGGDFPNH) is disordered. Over 1–142 (MNQESSFRAP…APRFDINAPD (142 aa)) the chain is Cytoplasmic. The chain crosses the membrane as a helical span at residues 143–163 (LYIPVMAFITYILVAGLALGT). Over 164-178 (QSRFSPEILGMQASS) the chain is Extracellular. Residues 179-199 (ALAWLIVEVLAILLSLYLVTV) form a helical membrane-spanning segment. The Cytoplasmic portion of the chain corresponds to 200-205 (NTDLTT). A helical transmembrane segment spans residues 206–226 (VDLVAFSGYKYVGMISGVIAG). Position 227 (leucine 227) is a topological domain, extracellular. A helical membrane pass occupies residues 228–248 (LFGNTGYYVVLAWCCISIVFF). Topologically, residues 249–278 (MIRTLRLKILSEAAAEGVLVRGARNQLRMY) are cytoplasmic. The helical transmembrane segment at 279–299 (LTMAIAAVQPIFMYWLTYHLV) threads the bilayer. A topological domain (extracellular) is located at residue arginine 300.

This sequence belongs to the YIF1 family.

The protein localises to the endoplasmic reticulum membrane. Its subcellular location is the golgi apparatus membrane. It localises to the endoplasmic reticulum-Golgi intermediate compartment membrane. Functionally, functions in endoplasmic reticulum to Golgi vesicle-mediated transport and regulates the proper organization of the endoplasmic reticulum and the Golgi. Plays a key role in targeting to neuronal dendrites receptors such as HTR1A. Plays also a role in primary cilium and sperm flagellum assembly probably through protein transport to these compartments. In Xenopus laevis (African clawed frog), this protein is Protein YIF1B-B (yif1b-b).